A 302-amino-acid chain; its full sequence is Deoxyribonuclease-1-like 1 (302 aa).

A signal peptide spans 1–18 (MHYPTALLFLILVNGAQA). Catalysis depends on residues E97 and H148. C187 and C224 are joined by a disulfide. Residue N261 is glycosylated (N-linked (GlcNAc...) asparagine).

This sequence belongs to the DNase I family.

The protein localises to the endoplasmic reticulum. The sequence is that of Deoxyribonuclease-1-like 1 (DNASE1L1) from Chlorocebus aethiops (Green monkey).